Consider the following 143-residue polypeptide: MAKKILGYIKLQVKAGSATPSPPIGPALGQRGVNIMGFCKEFNARTENVEKGTPLPTVITVYQDKSFTFVTKTPPATHYLKQITGLKSGAKLTGRETVGEVTRTQLREIAEKKMKDLNANDLEAAAKIIEGSAKAMGLKIVEA.

The protein belongs to the universal ribosomal protein uL11 family. As to quaternary structure, part of the ribosomal stalk of the 50S ribosomal subunit. Interacts with L10 and the large rRNA to form the base of the stalk. L10 forms an elongated spine to which L12 dimers bind in a sequential fashion forming a multimeric L10(L12)X complex. One or more lysine residues are methylated.

Functionally, forms part of the ribosomal stalk which helps the ribosome interact with GTP-bound translation factors. The protein is Large ribosomal subunit protein uL11 of Caulobacter sp. (strain K31).